Here is a 1000-residue protein sequence, read N- to C-terminus: MLGAWRAAPRLRLRARFGVASVWARSAASEANSRRPAEESRQDSQYRDTVLLPHSRFAAQLPGRLQPDTELETQQKSGFLELYSWQRQRKAKQEFCLHDGPPYANGDPHVGHALNKILKDITNRFHMMRGYKVHYVPGWDCHGLPIELKALSEVKGAENLSPVEIRQKAKEFAERAIEKQKAAFIRWGIMADWANCYRTFDPKYEANQLRVFHKMYDKGFIYQDYKPVFWSPSAKTALAEAELEYNEQHVSRSVYMKFPLLKSPPKLASVIDGSSPASVLVWTTQPWTVPANQAVCYMPDAEYSVVKCATTGEHLILAADRVESTAAVLDTQFEVISTCKGVDLADGSCAHPTIAGRVSPLLPANHVTMTKGTGLVHTAPAHGMEDYNVASHHQLPTECLVDESGHFTEAAGPELKNKNVLEEGNEAVIKMLQAAGSLLKEEKYVHSYPYDWRTKKPMIIRASKQWFVNTANVKATAQEALKKVKIIPTSAVNRMLEMLDRRTFWCISRQRCWGVPIPVFYQKDTGESLINSETIADVIKIVEQQGTDAWWTLPIEQLLSKEAVAKAGGHNVLDYVKGQDVLDIWFDSGTSWAHVLEGAEQRADVYLEGKDQLGGWFQSSLLTSVATRKKAPYKTLVVHGFTLGEKGEKMSKSIGNVVDPDVVINGGDDHTKDPPYGADVLRWWVAESNVFTEVLIGPVVLNAARDDINKLRNTLRFMLGNMAGFNPETDSIPPSEMYIVDQYMLHLLQDYGSKVTEAYKEYDYSKVVRLLQAFCSRNLSNFYFSIIKDRLYCEEEKDPKRRSCQTVLAEALDVVVRSFAPILPHLAEEVFQHLPYKKDSEGVFRTGWINASSGWKKPGIEEAIEGACAMRDSFLGSISGKNALEYEVIIVIEPGLLFELMEALQAEESSRVSQLNEIMMASQTTLLSEIPKETPADANIVKGNFLINLEGGDIREESSYQVIALPTTKAKCPRCRRYTSDSSSTPCPRCLKVIAGKGST.

A mitochondrion-targeting transit peptide spans 1-27 (MLGAWRAAPRLRLRARFGVASVWARSA). The 'HIGH' region signature appears at 102–112 (PYANGDPHVGH). Positions 649 and 652 each coordinate ATP. The 'KMSKS' region signature appears at 649-653 (KMSKS).

Belongs to the class-I aminoacyl-tRNA synthetase family.

The protein resides in the mitochondrion matrix. The catalysed reaction is tRNA(Ile) + L-isoleucine + ATP = L-isoleucyl-tRNA(Ile) + AMP + diphosphate. Aminoacyl-tRNA synthetase that catalyzes the specific attachment of isoleucine to its cognate tRNA (tRNA(Ile)). The protein is Isoleucine--tRNA ligase, mitochondrial (IARS2) of Gallus gallus (Chicken).